We begin with the raw amino-acid sequence, 90 residues long: UPF0329 protein ECU04_1650 (90 aa).

Belongs to the UPF0329 family.

The polypeptide is UPF0329 protein ECU04_1650 (Encephalitozoon cuniculi (strain GB-M1) (Microsporidian parasite)).